The following is a 150-amino-acid chain: Large ribosomal subunit protein bL9 (150 aa).

The protein belongs to the bacterial ribosomal protein bL9 family.

Its function is as follows. Binds to the 23S rRNA. The polypeptide is Large ribosomal subunit protein bL9 (Neisseria gonorrhoeae).